Here is a 179-residue protein sequence, read N- to C-terminus: MARLKDYYQNEVVAKLKSELNLDNIMEVPAIKKITLNMGVGDAAKDKKIMTFALNDLTAIAGQKPVVTMSKKSIAGFKIRDGWPIGAKVTLRGERMYEFLDRLITIAIPRIRDFRGLSAKSFDGRGNYSLGMKEQISFPEIDYDKIDSIRGLDISITTTAKNDDQGRALLKAFGFPFKS.

It belongs to the universal ribosomal protein uL5 family. In terms of assembly, part of the 50S ribosomal subunit; part of the 5S rRNA/L5/L18/L25 subcomplex. Contacts the 5S rRNA and the P site tRNA. Forms a bridge to the 30S subunit in the 70S ribosome.

In terms of biological role, this is one of the proteins that bind and probably mediate the attachment of the 5S RNA into the large ribosomal subunit, where it forms part of the central protuberance. In the 70S ribosome it contacts protein S13 of the 30S subunit (bridge B1b), connecting the 2 subunits; this bridge is implicated in subunit movement. Contacts the P site tRNA; the 5S rRNA and some of its associated proteins might help stabilize positioning of ribosome-bound tRNAs. This Francisella philomiragia subsp. philomiragia (strain ATCC 25017 / CCUG 19701 / FSC 153 / O#319-036) protein is Large ribosomal subunit protein uL5.